The chain runs to 396 residues: Protein NDRG1-A (396 aa).

The disordered stretch occupies residues 326–396 (RSRTGSAASS…NSPKSMEVSC (71 aa)). Positions 327 to 340 (SRTGSAASSSSQDG) are enriched in low complexity. 4 consecutive repeat copies span residues 340 to 349 (GNRSRSHTNE), 350 to 359 (GSRSRSHTGD), 360 to 369 (GNRSRAHTGD), and 370 to 379 (GNRSRSHTDT). The 4 X 10 AA tandem repeats of G-[NS]-R-S-R-[AS]-H-T-[DGN]-[DET] stretch occupies residues 340-379 (GNRSRSHTNEGSRSRSHTGDGNRSRAHTGDGNRSRSHTDT). The segment covering 346–377 (HTNEGSRSRSHTGDGNRSRAHTGDGNRSRSHT) has biased composition (basic and acidic residues). Positions 378–390 (DTNNINSDQNSPK) are enriched in polar residues.

The protein belongs to the NDRG family.

May be involved in pronephros development, after specification of the pronephros. This Xenopus laevis (African clawed frog) protein is Protein NDRG1-A (ndrg1-a).